The primary structure comprises 449 residues: Cryptochrome DASH (449 aa).

One can recognise a Photolyase/cryptochrome alpha/beta domain in the interval 15-147 (RLGLFVFRND…PFHETPNNTL (133 aa)).

Belongs to the DNA photolyase class-1 family. FAD serves as cofactor. The cofactor is (6R)-5,10-methylene-5,6,7,8-tetrahydrofolate.

May have a photoreceptor function. Binds DNA; probably functions as a transcriptional repressor. This is Cryptochrome DASH (cry) from Idiomarina loihiensis (strain ATCC BAA-735 / DSM 15497 / L2-TR).